We begin with the raw amino-acid sequence, 393 residues long: S-adenosylmethionine synthase (393 aa).

His-16 contacts ATP. Residue Asp-18 coordinates Mg(2+). Glu-44 contacts K(+). Residues Glu-57 and Gln-100 each contribute to the L-methionine site. Residues 100 to 110 are flexible loop; it reads QSNDIAQGVDH. ATP is bound by residues 167-169, 238-239, Asp-247, 253-254, Ala-270, and Lys-274; these read DAK, RF, and RK. Position 247 (Asp-247) interacts with L-methionine. Lys-278 is an L-methionine binding site.

This sequence belongs to the AdoMet synthase family. In terms of assembly, homotetramer; dimer of dimers. The cofactor is Mg(2+). It depends on K(+) as a cofactor.

It is found in the cytoplasm. The catalysed reaction is L-methionine + ATP + H2O = S-adenosyl-L-methionine + phosphate + diphosphate. It functions in the pathway amino-acid biosynthesis; S-adenosyl-L-methionine biosynthesis; S-adenosyl-L-methionine from L-methionine: step 1/1. Functionally, catalyzes the formation of S-adenosylmethionine (AdoMet) from methionine and ATP. The overall synthetic reaction is composed of two sequential steps, AdoMet formation and the subsequent tripolyphosphate hydrolysis which occurs prior to release of AdoMet from the enzyme. The chain is S-adenosylmethionine synthase from Polaromonas sp. (strain JS666 / ATCC BAA-500).